A 443-amino-acid polypeptide reads, in one-letter code: Cobyrinate a,c-diamide synthase (443 aa).

Positions 244–435 (KVSVAMDSAF…AHIHFLSNPR (192 aa)) constitute a GATase cobBQ-type domain. The active-site Nucleophile is the Cys327.

Belongs to the CobB/CbiA family. Requires Mg(2+) as cofactor.

The catalysed reaction is cob(II)yrinate + 2 L-glutamine + 2 ATP + 2 H2O = cob(II)yrinate a,c diamide + 2 L-glutamate + 2 ADP + 2 phosphate + 2 H(+). It functions in the pathway cofactor biosynthesis; adenosylcobalamin biosynthesis; cob(II)yrinate a,c-diamide from sirohydrochlorin (anaerobic route): step 10/10. Functionally, catalyzes the ATP-dependent amidation of the two carboxylate groups at positions a and c of cobyrinate, using either L-glutamine or ammonia as the nitrogen source. The protein is Cobyrinate a,c-diamide synthase of Thermoplasma acidophilum (strain ATCC 25905 / DSM 1728 / JCM 9062 / NBRC 15155 / AMRC-C165).